The following is a 527-amino-acid chain: Ribonuclease Y (527 aa).

The helical transmembrane segment at Ile21 to Val41 threads the bilayer. The tract at residues Arg78–Glu97 is disordered. The region spanning Thr217–Val302 is the KH domain. An HD domain is found at Val343–Ala436.

It belongs to the RNase Y family.

The protein resides in the cell membrane. Functionally, endoribonuclease that initiates mRNA decay. The protein is Ribonuclease Y of Dehalococcoides mccartyi (strain ATCC BAA-2100 / JCM 16839 / KCTC 5957 / BAV1).